The primary structure comprises 305 residues: tRNA-cytidine(32) 2-sulfurtransferase (305 aa).

A disordered region spans residues 1–20; that stretch reads MTAVLPLPQPLADPAPRDPR. Positions 59 to 64 match the PP-loop motif motif; that stretch reads SGGKDS. C134, C137, and C225 together coordinate [4Fe-4S] cluster. The segment covering 282–293 has biased composition (low complexity); it reads DAPSDVDPDPSA. The disordered stretch occupies residues 282–305; it reads DAPSDVDPDPSAWLSASHAPHDSD.

It belongs to the TtcA family. In terms of assembly, homodimer. It depends on Mg(2+) as a cofactor. [4Fe-4S] cluster serves as cofactor.

It is found in the cytoplasm. It catalyses the reaction cytidine(32) in tRNA + S-sulfanyl-L-cysteinyl-[cysteine desulfurase] + AH2 + ATP = 2-thiocytidine(32) in tRNA + L-cysteinyl-[cysteine desulfurase] + A + AMP + diphosphate + H(+). It participates in tRNA modification. Its function is as follows. Catalyzes the ATP-dependent 2-thiolation of cytidine in position 32 of tRNA, to form 2-thiocytidine (s(2)C32). The sulfur atoms are provided by the cysteine/cysteine desulfurase (IscS) system. This is tRNA-cytidine(32) 2-sulfurtransferase from Xanthomonas euvesicatoria pv. vesicatoria (strain 85-10) (Xanthomonas campestris pv. vesicatoria).